We begin with the raw amino-acid sequence, 198 residues long: NAD(P)H dehydrogenase (quinone) (198 aa).

The Flavodoxin-like domain maps to 4-189; it reads ILVLYYSMYG…SIARYQGEYV (186 aa). Residues 10–15 and 78–80 contribute to the FMN site; these read SMYGHI and TRF. Position 12 (Tyr-12) interacts with NAD(+). A substrate-binding site is contributed by Trp-98. FMN contacts are provided by residues 113–118 and His-133; that span reads STGTGG.

The protein belongs to the WrbA family. It depends on FMN as a cofactor.

The enzyme catalyses a quinone + NADH + H(+) = a quinol + NAD(+). It carries out the reaction a quinone + NADPH + H(+) = a quinol + NADP(+). This chain is NAD(P)H dehydrogenase (quinone), found in Salmonella typhi.